The following is a 197-amino-acid chain: Isopentenyl-diphosphate Delta-isomerase (197 aa).

Residues H41 and H48 each coordinate Mn(2+). The Nudix hydrolase domain maps to 46–183 (QLHRAFSVFL…SWFMTVLDAA (138 aa)). The active site involves C83. C83 is a binding site for Mg(2+). Residue H85 participates in Mn(2+) binding. E103 lines the Mg(2+) pocket. Residues E130 and E132 each contribute to the Mn(2+) site. The active site involves E132.

The protein belongs to the IPP isomerase type 1 family. Mg(2+) serves as cofactor. Mn(2+) is required as a cofactor.

Its subcellular location is the cytoplasm. It carries out the reaction isopentenyl diphosphate = dimethylallyl diphosphate. The protein operates within isoprenoid biosynthesis; dimethylallyl diphosphate biosynthesis; dimethylallyl diphosphate from isopentenyl diphosphate: step 1/1. Catalyzes the 1,3-allylic rearrangement of the homoallylic substrate isopentenyl (IPP) to its highly electrophilic allylic isomer, dimethylallyl diphosphate (DMAPP). This is Isopentenyl-diphosphate Delta-isomerase from Streptomyces avermitilis (strain ATCC 31267 / DSM 46492 / JCM 5070 / NBRC 14893 / NCIMB 12804 / NRRL 8165 / MA-4680).